The sequence spans 407 residues: Zinc finger protein 260 (407 aa).

The tract at residues 1 to 21 (MLESLQPESELLHDEPDPGEK) is disordered. The segment covering 10-21 (ELLHDEPDPGEK) has biased composition (basic and acidic residues). Residues 23 to 45 (YECDECRKTFSLEQHFVEHKKTH) form a C2H2-type 1 zinc finger. The segment at 51 to 73 (PECTGCGEEFSKASSLTRHLRSR) adopts a C2H2-type 2; degenerate zinc-finger fold. C2H2-type zinc fingers lie at residues 79–101 (YKCG…QKQH), 131–153 (YACK…EKIH), 159–181 (FECN…QNVH), 187–209 (FKCN…QRIH), 215–237 (YECK…QRSH), 243–265 (YTCK…EKIH), 271–293 (YKCN…HNIH), 299–321 (YECN…VRIH), 327–349 (YECK…MRSH), 355–377 (YGCN…MRIH), and 383–405 (YQCS…QRIH).

It belongs to the krueppel C2H2-type zinc-finger protein family. As to quaternary structure, binds DNA. Interacts with GATA4. In terms of tissue distribution, expressed in both embryonic, fetal and adult heart. Also expressed in lung, skeletal muscle and adrenal glands.

The protein resides in the nucleus. Functionally, transcription factor that acts as a cardiac regulator and an effector of alpha1-adrenergic signaling. Binds to PE response elements (PERE) present in the promoter of genes such as ANF/NPPA and acts as a direct transcriptional activator of NPPA. Also acts as a cofactor with GATA4, a key cardiac regulator. The chain is Zinc finger protein 260 (Znf260) from Rattus norvegicus (Rat).